A 335-amino-acid chain; its full sequence is tRNA N6-adenosine threonylcarbamoyltransferase (335 aa).

The Fe cation site is built by His111 and His115. Substrate contacts are provided by residues Leu133–Gly137, Asp166, Gly179, and Asn276. Asp301 is a Fe cation binding site.

It belongs to the KAE1 / TsaD family. Fe(2+) is required as a cofactor.

The protein localises to the cytoplasm. The catalysed reaction is L-threonylcarbamoyladenylate + adenosine(37) in tRNA = N(6)-L-threonylcarbamoyladenosine(37) in tRNA + AMP + H(+). Required for the formation of a threonylcarbamoyl group on adenosine at position 37 (t(6)A37) in tRNAs that read codons beginning with adenine. Is involved in the transfer of the threonylcarbamoyl moiety of threonylcarbamoyl-AMP (TC-AMP) to the N6 group of A37, together with TsaE and TsaB. TsaD likely plays a direct catalytic role in this reaction. The chain is tRNA N6-adenosine threonylcarbamoyltransferase from Wolbachia pipientis wMel.